We begin with the raw amino-acid sequence, 188 residues long: MKVILASASQRRQELLIRLCDEFDIMVSDFDEEKVVFKNSIDEYVQNIALGKAMDIKEKLKEDAIIISADTIVTLDDKILGKPKDEEDAFNMIKLLQGRSHKVYSGVVVINTKKDLILKNSVATEVVFSKMNDNEIRKYIETKEPLDKAGAYGIQGIGGIFVEEIRGCYYNVVGLPLNKLKTMLEEAI.

Residue aspartate 70 is the Proton acceptor of the active site.

The protein belongs to the Maf family. YhdE subfamily. A divalent metal cation serves as cofactor.

It is found in the cytoplasm. The enzyme catalyses dTTP + H2O = dTMP + diphosphate + H(+). The catalysed reaction is UTP + H2O = UMP + diphosphate + H(+). In terms of biological role, nucleoside triphosphate pyrophosphatase that hydrolyzes dTTP and UTP. May have a dual role in cell division arrest and in preventing the incorporation of modified nucleotides into cellular nucleic acids. The protein is dTTP/UTP pyrophosphatase of Clostridium botulinum (strain Alaska E43 / Type E3).